Here is a 245-residue protein sequence, read N- to C-terminus: OVARIAN TUMOR DOMAIN-containing deubiquitinating enzyme 11 (245 aa).

The segment at 1–37 is disordered; sequence MDENHRNPFANASTSARASGSTSASSNSSFSSSVADT. Over residues 10–35 the composition is skewed to low complexity; sequence ANASTSARASGSTSASSNSSFSSSVA. One can recognise an OTU domain in the interval 101-225; that stretch reads LAELQMEGDG…EVHYNSLYAN (125 aa). Aspartate 109 is a catalytic residue. Residue cysteine 112 is the Nucleophile of the active site. Residue histidine 218 is part of the active site.

Belongs to the peptidase C85 family.

The enzyme catalyses Thiol-dependent hydrolysis of ester, thioester, amide, peptide and isopeptide bonds formed by the C-terminal Gly of ubiquitin (a 76-residue protein attached to proteins as an intracellular targeting signal).. Its function is as follows. Hydrolase that can remove conjugated ubiquitin from proteins in vitro and may therefore play an important regulatory role at the level of protein turnover by preventing degradation. Inactive cysteine protease. The polypeptide is OVARIAN TUMOR DOMAIN-containing deubiquitinating enzyme 11 (Arabidopsis thaliana (Mouse-ear cress)).